The chain runs to 323 residues: MIVKFEKFEKLKKPLVIFLMGPTACNKSLLAMTLKDILPIELVSVDSALIYRGMDIGTAKPSNMELLKYPHFLVNIRDPLQTYSVGEFYKDILKIIDYIHSINKVPLLVGGTMFYFKILLTGGLSNLPSSNDNIRKYLLTLLQKKSKFFLFNQLKSIDPISAERIHFNDVQRVLRALEVFFISGKTLTELCRLKNFVSPYNIVQFSLMPESKEWLFNKITIRFKKMLSCGFEYEVKKLFNRGDLHKNLPSIRCVGYRQMWDYFMHNLTYDDMICESLKATKRLVKSQLTWLNNWKKLNVLSSSDTLKNLITKIISVINANIFV.

ATP is bound at residue 21 to 28; that stretch reads GPTACNKS. Residue 23 to 28 participates in substrate binding; the sequence is TACNKS. 3 interaction with substrate tRNA regions span residues 46-49, 171-175, and 252-257; these read DSAL, QRVLR, and RCVGYR.

It belongs to the IPP transferase family. Monomer. Mg(2+) serves as cofactor.

It catalyses the reaction adenosine(37) in tRNA + dimethylallyl diphosphate = N(6)-dimethylallyladenosine(37) in tRNA + diphosphate. Catalyzes the transfer of a dimethylallyl group onto the adenine at position 37 in tRNAs that read codons beginning with uridine, leading to the formation of N6-(dimethylallyl)adenosine (i(6)A). In Buchnera aphidicola subsp. Baizongia pistaciae (strain Bp), this protein is tRNA dimethylallyltransferase.